A 185-amino-acid polypeptide reads, in one-letter code: UPF0301 protein MS0260 (185 aa).

Belongs to the UPF0301 (AlgH) family.

The protein is UPF0301 protein MS0260 of Mannheimia succiniciproducens (strain KCTC 0769BP / MBEL55E).